The following is a 123-amino-acid chain: UPF0102 protein SPO0400 (123 aa).

It belongs to the UPF0102 family.

The protein is UPF0102 protein SPO0400 of Ruegeria pomeroyi (strain ATCC 700808 / DSM 15171 / DSS-3) (Silicibacter pomeroyi).